The primary structure comprises 197 residues: Large ribosomal subunit protein bL25 (197 aa).

This sequence belongs to the bacterial ribosomal protein bL25 family. CTC subfamily. As to quaternary structure, part of the 50S ribosomal subunit; part of the 5S rRNA/L5/L18/L25 subcomplex. Contacts the 5S rRNA. Binds to the 5S rRNA independently of L5 and L18.

This is one of the proteins that binds to the 5S RNA in the ribosome where it forms part of the central protuberance. This Citrifermentans bemidjiense (strain ATCC BAA-1014 / DSM 16622 / JCM 12645 / Bem) (Geobacter bemidjiensis) protein is Large ribosomal subunit protein bL25.